Here is a 551-residue protein sequence, read N- to C-terminus: Probable terminase, large subunit gp28 (551 aa).

Belongs to the T4likevirus large terminase family. Interacts with the terminase small subunit gp28. Requires Mg(2+) as cofactor.

Its subcellular location is the host cytoplasm. Functionally, the terminase large subunit acts as an ATP driven molecular motor necessary for viral DNA translocation into empty capsids and as an endonuclease that cuts the viral genome to initiate and to end a packaging reaction. The terminase lies at a unique vertex of the procapsid and is composed of two subunits, a small terminase subunit involved in viral DNA recognition (packaging sequence), and a large terminase subunit possessing endonucleolytic and ATPase activities. Both terminase subunits heterooligomerize and are docked on the portal protein to form the packaging machine. The terminase large subunit exhibits endonuclease activity and cleaves the viral genome concatemer once the capsid is full (headful packaging). Once the capsid is packaged with the DNA, the terminase complex is substituted by neck proteins. The polypeptide is Probable terminase, large subunit gp28 (Escherichia phage Mu (Bacteriophage Mu)).